Reading from the N-terminus, the 96-residue chain is Exodeoxyribonuclease 7 small subunit (96 aa).

The disordered stretch occupies residues 73–96; it reads RAPEQSAANDVSAPGSAEEHDHGR.

This sequence belongs to the XseB family. In terms of assembly, heterooligomer composed of large and small subunits.

It is found in the cytoplasm. It catalyses the reaction Exonucleolytic cleavage in either 5'- to 3'- or 3'- to 5'-direction to yield nucleoside 5'-phosphates.. Bidirectionally degrades single-stranded DNA into large acid-insoluble oligonucleotides, which are then degraded further into small acid-soluble oligonucleotides. The sequence is that of Exodeoxyribonuclease 7 small subunit from Acidothermus cellulolyticus (strain ATCC 43068 / DSM 8971 / 11B).